The primary structure comprises 436 residues: MAKKMKLSDITNMFVGMDVEALEGVTIEGDIEIDLGGLGGGFDPMLAAALGQESAVLAQHFARLAGMFGYPVGFGGAAAPAISPALAAPKLKDLIPAKFDVANIAEWTTEIQEVPIGNTSADGGSRGKRVLVGGEKALPFYFDAPMPNRNQVTIDVFDMRIGLAKAVKENYDEVMDSPGEWAKKNVEKFNADMITIHLISTDPLIKDTPAKEAAKTVEEVLQAVDVPIAIGGSGNPQKDPEVLAKAAEVAEGERCLLASASLNLDYAAIAEAALKYDHDVLSWTQLDMNAQKELNRKLMKQCNVPRDRIIMDPTTAALGYGLDYAYTNMERIRLAALMGDDELTFPMSSGTTNAWGARESWMVGSPLSQDTDWGPREYRGPIWEIVTGLSLAIAGNDLFMMMHPTSVAVLKQITQTLFGSIEAEPVDITNWIGAEV.

Belongs to the CdhD family. Heterodimer of delta and gamma chains. The ACDS complex is made up of alpha, epsilon, beta, gamma and delta chains with a probable stoichiometry of (alpha(2)epsilon(2))(4)-beta(8)-(gamma(1)delta(1))(8) (Potential).

Its pathway is one-carbon metabolism; methanogenesis from acetate. Its function is as follows. Part of a complex that catalyzes the reversible cleavage of acetyl-CoA, allowing growth on acetate as sole source of carbon and energy. Probably maintains the overall quaternary structure of the ACDS complex. This chain is Acetyl-CoA decarbonylase/synthase complex subunit delta 1 (cdhD1), found in Methanosarcina thermophila.